The sequence spans 798 residues: Probable G-protein coupled receptor 156 (798 aa).

The Extracellular segment spans residues 1-49 (MEPEINCSEFCDSFPGQELDRRPLHDLCKTTITESQHSSTAASPLSPAL). Residue N6 is glycosylated (N-linked (GlcNAc...) asparagine). The helical transmembrane segment at 50–70 (LGIMWTFLSCGLLLVLFFLAF) threads the bilayer. The Cytoplasmic segment spans residues 71–86 (TIRCRKNRIVKMSSPN). A helical transmembrane segment spans residues 87–107 (LNVVTLLGSCLTYISAYLFGI). At 108–118 (QDALEGSSVEA) the chain is on the extracellular side. Residues 119-139 (LIQTRLSLLCIGTSLVFGPIL) form a helical membrane-spanning segment. The Cytoplasmic portion of the chain corresponds to 140-164 (GKSWRLYKVFTQRVPDKRVIIKDLQ). Residues 165–185 (LLGLVAALVVADVILLVTWVL) traverse the membrane as a helical segment. The Extracellular segment spans residues 186-222 (TDPIQCLQMLGVSMKVTGRDVSCSLTNTHFCASRYSD). A helical membrane pass occupies residues 223–243 (VWIALVLGCKGLLLLYGAYLA). The Cytoplasmic segment spans residues 244-257 (GLTNHVSSPPVNQS). Residues 258 to 278 (LTIMVGVNLLLLTAGLLFVVT) form a helical membrane-spanning segment. Topologically, residues 279-288 (RYLHSWPNLV) are extracellular. Residues 289 to 309 (FGLTSGGIFVCTTTVNCCVFI) form a helical membrane-spanning segment. Topologically, residues 310 to 798 (PQLKQWKAFE…FKDDLKPTLV (489 aa)) are cytoplasmic. Residues 353–390 (DEKSCMERLLTEKNAVIESLQEQVSNAKEKLVKLMSAE) adopt a coiled-coil conformation. Disordered regions lie at residues 441–497 (HVQG…PMAP), 546–666 (SEAP…KQCE), and 693–715 (PAAPCLPSSPALPRQRQPRPRLS). Basic and acidic residues predominate over residues 479–492 (PKAEQSEGPERGDQ). A compositionally biased stretch (polar residues) spans 559–572 (LWKSTTSRSPQKLS). Over residues 583–594 (VRRRRAAQRARS) the composition is skewed to basic residues. Over residues 606–624 (HQANSTVSSSQSGLIVQNR) the composition is skewed to polar residues. The span at 639 to 648 (PRSSSVKPSP) shows a compositional bias: low complexity.

The protein belongs to the G-protein coupled receptor 3 family. GABA-B receptor subfamily. As to expression, expressed in the outer and inner hair cells of the organ of Corti (at protein level). Expressed in the utricle and saccule within the vestibule (at protein level).

Its subcellular location is the cell membrane. The protein localises to the postsynaptic cell membrane. In terms of biological role, orphan G-protein coupled receptor involved in the regulation of hair cell orientation in mechanosensory organs of the inner ear. It is required to trigger a 180 degree reversal in hair cell orientation, creating a virtual line of polarity reversal (LPR) across which stereociliary bundles are arranged in opposite orientations. The protein is Probable G-protein coupled receptor 156 (Gpr156) of Mus musculus (Mouse).